A 1011-amino-acid polypeptide reads, in one-letter code: MDTCSQESEPLQTKESPINNAGKTPLVLGNGKLVTPHKQAAEMTPNCYTSETFKSPLNFSTVTVEQLGISPESFVNNSSGKSSPYLKKSRRRSTVGLRGLPETNHLIRFVAEQRSLKNASLTQTSPFQGSPALYRNVYSLREQMSAFHLAFNSIKENEKMTDCPEFSEAEGVFKTRGSTKKESLGECQLSEFSAQSSSKRRRLSSPSSSDVNLTDAVDLQACGVNMAACPSTDMKCAVETCAGLSQKSSASGLNLQCGCLMNESPLLSELTEASSGIQDAASVEERGSNDAVSVDKCTEVSTDTAPEVRSLVTPLCQKDLPSSKTFVLRSVLKKPAVKLCVESLQEHLDNLYNDETCPSLTSSLANSCKEQTAALPNTKKRKRVTFGEDLSPEVLDESLPANTPLRKGQTPVRKKDLSSLSPPLLEQSPVPEWLPQPNFDDKEENLENIEPLQVSFAVLSSLNMSSIAETLSGTDTSASSSNHENIAPFRVGRATRTSDRRSKLISFSQESVCNLLNAEAQPCKEKKTNRRKSQESKHADKVLPRKNRVLKGCKKKKGKGKRKGVQKSLYGERDLASKKPLLSPIPELPEVSETPLVGSLVRRTYPDDFNSNGKFEEMMLPKRENLLSQDPEDWQVIQGFNKDNASESCSSDMKSSSSFSNATFEQDANINSIEMDENENIPKAITLESENERKTGTECENSHISCTLVTVTPVVSDNPKPDFPLQSQELSAAGQNVENLFQIVKISEDMNIKCEKQSGFSVIPEDKLQTEHLIPDSQKECDCSEDVLTDQRKVSKSQGEDLGRNSAASCSGVSDRERKYRGHSVGGSDGPGLHLERTNNLQTSYSMSSLVEISLENSELCKDLSDSIEQSLQRTKSETKVRRSLRLQKSLEREGGLVWVSPPPPPASCTSQRTKRRTVGTLDSRGFEPVSSRQDPCTLPSTSSEENGEGFTAAPDASLPGKRRRRSFCTSTLANPKSTTQSRGCKRRSFLGQKRENTLQETSRESDLSEN.

Residues 1 to 22 are compositionally biased toward polar residues; the sequence is MDTCSQESEPLQTKESPINNAG. Residues 1–26 form a disordered region; that stretch reads MDTCSQESEPLQTKESPINNAGKTPL. Phosphoserine is present on residues Ser125, Ser130, Ser209, Ser293, and Ser310. Phosphothreonine is present on Thr313. The 61-residue stretch at 380 to 440 folds into the PP1-binding domain; sequence KRKRVTFGED…PEWLPQPNFD (61 aa). Phosphoserine is present on residues Ser391 and Ser398. 2 disordered regions span residues 395-438 and 522-544; these read LDES…PQPN and PCKE…KVLP. A Phosphothreonine modification is found at Thr403. Over residues 418 to 431 the composition is skewed to low complexity; it reads SSLSPPLLEQSPVP. A Phosphoserine modification is found at Ser428. Residues 522-543 are compositionally biased toward basic and acidic residues; sequence PCKEKKTNRRKSQESKHADKVL. Phosphoserine is present on residues Ser583, Ser702, and Ser747. Lys753 participates in a covalent cross-link: Glycyl lysine isopeptide (Lys-Gly) (interchain with G-Cter in SUMO2). The span at 790 to 803 shows a compositional bias: basic and acidic residues; sequence DQRKVSKSQGEDLG. Disordered regions lie at residues 790–835 and 896–1011; these read DQRK…GLHL and GLVW…LSEN. Polar residues predominate over residues 931–945; sequence SSRQDPCTLPSTSSE. Ser967 carries the phosphoserine modification. Polar residues predominate over residues 968–983; sequence FCTSTLANPKSTTQSR. Residues 993–1011 show a composition bias toward basic and acidic residues; it reads QKRENTLQETSRESDLSEN.

As to quaternary structure, interacts with PPP1CC. Post-translationally, phosphorylated by CDK1. May regulate its subcellular location.

It is found in the nucleus. In terms of biological role, regulator of chromosome structure during mitosis required for condensin-depleted chromosomes to retain their compact architecture through anaphase. Acts by mediating the recruitment of phopsphatase PP1-gamma subunit (PPP1CC) to chromatin at anaphase and into the following interphase. At anaphase onset, its association with chromatin targets a pool of PPP1CC to dephosphorylate substrates. In Bos taurus (Bovine), this protein is Cell division cycle-associated protein 2 (CDCA2).